The sequence spans 32 residues: MNKLPAHLSRQNCKIASTNLSEIIPRRAAVLK.

The chain is Protein YthB from Escherichia coli (strain K12).